The sequence spans 194 residues: Probable proteasome subunit beta type-4 (194 aa).

The protein belongs to the peptidase T1B family. In terms of assembly, the 26S proteasome consists of a 20S proteasome core and two 19S regulatory subunits. The 20S proteasome core is composed of 28 subunits that are arranged in four stacked rings, resulting in a barrel-shaped structure. The two end rings are each formed by seven alpha subunits, and the two central rings are each formed by seven beta subunits. The catalytic chamber with the active sites is on the inside of the barrel.

It localises to the cytoplasm. Its subcellular location is the nucleus. Functionally, non-catalytic component of the proteasome, a multicatalytic proteinase complex which is characterized by its ability to cleave peptides with Arg, Phe, Tyr, Leu, and Glu adjacent to the leaving group at neutral or slightly basic pH. The proteasome has an ATP-dependent proteolytic activity. In Meyerozyma guilliermondii (strain ATCC 6260 / CBS 566 / DSM 6381 / JCM 1539 / NBRC 10279 / NRRL Y-324) (Yeast), this protein is Probable proteasome subunit beta type-4 (PRO2).